Reading from the N-terminus, the 206-residue chain is Ras-related protein Rab-14 (206 aa).

15-22 (GDMGVGKS) contributes to the GTP binding site. Residues 37-45 (SPHTIGVEF) carry the Effector region motif. GTP is bound by residues 63 to 67 (DTAGQ) and 121 to 124 (NKKD). The tract at residues 182-206 (PDGGITKNPPQTITDKPQDASKCSC) is disordered. Residues 189-206 (NPPQTITDKPQDASKCSC) show a composition bias toward polar residues. 2 S-geranylgeranyl cysteine lipidation sites follow: Cys204 and Cys206. A Cysteine methyl ester modification is found at Cys206.

This sequence belongs to the small GTPase superfamily. Rab family.

It is found in the endosome. The protein localises to the contractile vacuole. It localises to the membrane. It carries out the reaction GTP + H2O = GDP + phosphate + H(+). Its activity is regulated as follows. Rab activation is generally mediated by a guanine exchange factor (GEF), while inactivation through hydrolysis of bound GTP is catalyzed by a GTPase activating protein (GAP). That Rab is activated by the DENND6A and DENND6B guanine exchange factors (GEF). The small GTPases Rab are key regulators of intracellular membrane trafficking, from the formation of transport vesicles to their fusion with membranes. Rabs cycle between an inactive GDP-bound form and an active GTP-bound form that is able to recruit to membranes different set of downstream effectors directly responsible for vesicle formation, movement, tethering and fusion. Regulates the fusion of phagosomes and lysosomes. In Dictyostelium discoideum (Social amoeba), this protein is Ras-related protein Rab-14 (rab14).